The following is a 1454-amino-acid chain: Receptor-type tyrosine-protein phosphatase T (1454 aa).

The N-terminal stretch at 1-29 (MGSLGGLALCLLRLLLLGLQRPPLPGAGA) is a signal peptide. Over 30 to 770 (QSAAGGCSFD…EKQVDNTVKM (741 aa)) the chain is Extracellular. Residues 34 to 195 (GGCSFDEHYS…VRVLAHPCRK (162 aa)) form the MAM domain. N82, N102, N141, and N212 each carry an N-linked (GlcNAc...) asparagine glycan. The Ig-like C2-type domain maps to 197 to 288 (PHFLRLQNVE…SGVSNYAELI (92 aa)). Cysteines 217 and 271 form a disulfide. 3 Fibronectin type-III domains span residues 295–388 (PIAP…TKCA), 393–487 (GPQN…TEED), and 488–594 (VPGA…SAPS). 6 N-linked (GlcNAc...) asparagine glycosylation sites follow: N425, N514, N551, N605, N658, and N688. Positions 670-767 (AELKPSNLPV…VEPEKQVDNT (98 aa)) constitute a Fibronectin type-III 4 domain. A helical membrane pass occupies residues 771 to 791 (AGVIAGLLMFIIILLGVMLTI). Over 792–1454 (KRRKLAKKQK…EVALEYLSSF (663 aa)) the chain is Cytoplasmic. Residues 800-852 (QKETQSGAQREMGPVASTDKPTAKLGTNRNDEGFSSSSQDVNGFTDGSRGELS) form a disordered region. A compositionally biased stretch (polar residues) spans 824–841 (LGTNRNDEGFSSSSQDVN). 2 Tyrosine-protein phosphatase domains span residues 902–1156 (FKEE…ILEA) and 1188–1450 (IKDE…ALEY). Substrate-binding positions include D1065, 1097-1103 (CSAGAGR), and Q1141. C1097 acts as the Phosphocysteine intermediate in catalysis. Position 1221 is a phosphoserine (S1221). The Phosphocysteine intermediate role is filled by C1391.

This sequence belongs to the protein-tyrosine phosphatase family. Receptor class 2B subfamily. As to expression, expression is restricted to the CNS. Distributed throughout the brain and spinal cord.

The protein resides in the membrane. It catalyses the reaction O-phospho-L-tyrosyl-[protein] + H2O = L-tyrosyl-[protein] + phosphate. Its function is as follows. May be involved in both signal transduction and cellular adhesion in the CNS. May have specific signaling roles in the tyrosine phosphorylation/dephosphorylation pathway in the anterior compartment of the adult cerebellar cortex. The sequence is that of Receptor-type tyrosine-protein phosphatase T (Ptprt) from Mus musculus (Mouse).